Reading from the N-terminus, the 411-residue chain is MSTLERIDPEIADVICEEEKRQRGKLELIASENFVSEAVREAQGSVLTNKYAEGYPGKRYYGGCEFVDMAERLAQERAKKLFDAEYANVQPHSGSQANMAIFFAVLQPGDTVLGMDLRQGGHLTHGSPVSFSGKLYNVVSYGVRKDTEQIDFDQVARLAREHRPKLIIAGASAYPRIIDFARFGQIAKEIAAYLMVDMAHIAGLVCSGLHPSPVPHADFVTSTTHKTLRGPRGGLILSHSNYTRLLDSQIFPGIQGGPLMHVIAAKAVAFREALQPSFKEYQQRVVADAAALAQELKALGYRLVSGGTDNHLMLVDLTPQGVTGRVAEETLDKAGITVNKNSIPFDQQKPQVTSGIRIGTPALATRGILPHHMKAVAGFMHRGLKSAGDEPALARLRAEVAEFCSAFPLFS.

(6S)-5,6,7,8-tetrahydrofolate is bound by residues leucine 117 and 121 to 123 (GHL). N6-(pyridoxal phosphate)lysine is present on lysine 226.

The protein belongs to the SHMT family. As to quaternary structure, homodimer. It depends on pyridoxal 5'-phosphate as a cofactor.

The protein resides in the cytoplasm. It carries out the reaction (6R)-5,10-methylene-5,6,7,8-tetrahydrofolate + glycine + H2O = (6S)-5,6,7,8-tetrahydrofolate + L-serine. Its pathway is one-carbon metabolism; tetrahydrofolate interconversion. It functions in the pathway amino-acid biosynthesis; glycine biosynthesis; glycine from L-serine: step 1/1. In terms of biological role, catalyzes the reversible interconversion of serine and glycine with tetrahydrofolate (THF) serving as the one-carbon carrier. This reaction serves as the major source of one-carbon groups required for the biosynthesis of purines, thymidylate, methionine, and other important biomolecules. Also exhibits THF-independent aldolase activity toward beta-hydroxyamino acids, producing glycine and aldehydes, via a retro-aldol mechanism. In Syntrophobacter fumaroxidans (strain DSM 10017 / MPOB), this protein is Serine hydroxymethyltransferase.